The following is a 449-amino-acid chain: Glutathione reductase (449 aa).

FAD-binding residues include Ser-15, Gly-16, Glu-35, Thr-42, Cys-43, and Lys-51. Ser-15 serves as a coordination point for glutathione. Cysteines 43 and 48 form a disulfide. A glutathione-binding site is contributed by Tyr-99. Position 115 (Ala-115) interacts with FAD. 6 residues coordinate NADP(+): Gly-175, Ile-178, Glu-181, Arg-198, Arg-204, and Gly-261. The FAD site is built by Asp-302 and Thr-310. Ala-340 is a binding site for NADP(+). His-435 provides a ligand contact to FAD. His-435 functions as the Proton acceptor in the catalytic mechanism.

Belongs to the class-I pyridine nucleotide-disulfide oxidoreductase family. In terms of assembly, homodimer. The cofactor is FAD.

It is found in the cytoplasm. The enzyme catalyses 2 glutathione + NADP(+) = glutathione disulfide + NADPH + H(+). It functions in the pathway xenobiotic degradation; (2,4,5-trichlorophenoxy)acetate degradation. Functionally, catalyzes the reduction of glutathione disulfide (GSSG) to reduced glutathione (GSH). Constitutes the major mechanism to maintain a high GSH:GSSG ratio in the cytosol. The chain is Glutathione reductase (gor) from Burkholderia cepacia (Pseudomonas cepacia).